The primary structure comprises 198 residues: Small ribosomal subunit protein uS4 (198 aa).

The S4 RNA-binding domain maps to 90–152; it reads TRLDNLVLRA…SRSNELFKEN (63 aa).

This sequence belongs to the universal ribosomal protein uS4 family. Part of the 30S ribosomal subunit. Contacts protein S5. The interaction surface between S4 and S5 is involved in control of translational fidelity.

Functionally, one of the primary rRNA binding proteins, it binds directly to 16S rRNA where it nucleates assembly of the body of the 30S subunit. Its function is as follows. With S5 and S12 plays an important role in translational accuracy. In Finegoldia magna (strain ATCC 29328 / DSM 20472 / WAL 2508) (Peptostreptococcus magnus), this protein is Small ribosomal subunit protein uS4.